A 447-amino-acid chain; its full sequence is N-succinylarginine dihydrolase (447 aa).

Substrate contacts are provided by residues 19–28 (AGLSVGNKAS), Asn110, and 137–138 (HR). Glu174 is a catalytic residue. Substrate is bound at residue Arg213. His249 is a catalytic residue. Asp251 and Asn365 together coordinate substrate. Catalysis depends on Cys371, which acts as the Nucleophile.

This sequence belongs to the succinylarginine dihydrolase family. In terms of assembly, homodimer.

The enzyme catalyses N(2)-succinyl-L-arginine + 2 H2O + 2 H(+) = N(2)-succinyl-L-ornithine + 2 NH4(+) + CO2. The protein operates within amino-acid degradation; L-arginine degradation via AST pathway; L-glutamate and succinate from L-arginine: step 2/5. Its function is as follows. Catalyzes the hydrolysis of N(2)-succinylarginine into N(2)-succinylornithine, ammonia and CO(2). The protein is N-succinylarginine dihydrolase of Photorhabdus laumondii subsp. laumondii (strain DSM 15139 / CIP 105565 / TT01) (Photorhabdus luminescens subsp. laumondii).